Reading from the N-terminus, the 245-residue chain is 1-(5-phosphoribosyl)-5-[(5-phosphoribosylamino)methylideneamino] imidazole-4-carboxamide isomerase (245 aa).

Asp11 (proton acceptor) is an active-site residue. Asp132 acts as the Proton donor in catalysis.

It belongs to the HisA/HisF family.

The protein localises to the cytoplasm. The catalysed reaction is 1-(5-phospho-beta-D-ribosyl)-5-[(5-phospho-beta-D-ribosylamino)methylideneamino]imidazole-4-carboxamide = 5-[(5-phospho-1-deoxy-D-ribulos-1-ylimino)methylamino]-1-(5-phospho-beta-D-ribosyl)imidazole-4-carboxamide. The protein operates within amino-acid biosynthesis; L-histidine biosynthesis; L-histidine from 5-phospho-alpha-D-ribose 1-diphosphate: step 4/9. The chain is 1-(5-phosphoribosyl)-5-[(5-phosphoribosylamino)methylideneamino] imidazole-4-carboxamide isomerase from Geobacillus thermodenitrificans (strain NG80-2).